Here is a 268-residue protein sequence, read N- to C-terminus: tRNA (guanine-N(1)-)-methyltransferase (268 aa).

Residues Gly-110 and 129–134 (IGDFVM) each bind S-adenosyl-L-methionine. Positions 246 to 268 (WGAPPAPVKRHRKRRPETTESAS) are disordered.

This sequence belongs to the RNA methyltransferase TrmD family. In terms of assembly, homodimer.

It localises to the cytoplasm. It carries out the reaction guanosine(37) in tRNA + S-adenosyl-L-methionine = N(1)-methylguanosine(37) in tRNA + S-adenosyl-L-homocysteine + H(+). Specifically methylates guanosine-37 in various tRNAs. This is tRNA (guanine-N(1)-)-methyltransferase from Deinococcus deserti (strain DSM 17065 / CIP 109153 / LMG 22923 / VCD115).